We begin with the raw amino-acid sequence, 285 residues long: Hydrolase in pqqF 5'region (285 aa).

The 237-residue stretch at 22–258 (MRVALYQCPP…EALIIGTLDR (237 aa)) folds into the CN hydrolase domain. Residue Glu-60 is the Proton acceptor of the active site. Lys-131 serves as the catalytic Proton donor. Catalysis depends on Cys-165, which acts as the Nucleophile.

This sequence belongs to the carbon-nitrogen hydrolase superfamily. NIT1/NIT2 family.

The protein is Hydrolase in pqqF 5'region of Pseudomonas protegens (strain DSM 19095 / LMG 27888 / CFBP 6595 / CHA0).